We begin with the raw amino-acid sequence, 699 residues long: D-(-)-3-hydroxybutyrate oligomer hydrolase (699 aa).

Positions 1–33 (MTAIRGGSRRAPGLALALLGGVLLGACHGDENA) are cleaved as a signal peptide. The Charge relay system role is filled by S311.

Belongs to the D-(-)-3-hydroxybutyrate oligomer hydrolase family.

Its subcellular location is the secreted. The catalysed reaction is (3R)-hydroxybutanoate dimer + H2O = 2 (R)-3-hydroxybutanoate + H(+). It participates in lipid metabolism; butanoate metabolism. Participates in the degradation of poly-3-hydroxybutyrate (PHB). It works downstream of poly(3-hydroxybutyrate) depolymerase, hydrolyzing D(-)-3-hydroxybutyrate oligomers of various length (3HB-oligomers) into 3HB-monomers. In Burkholderia pseudomallei (strain 1710b), this protein is D-(-)-3-hydroxybutyrate oligomer hydrolase.